We begin with the raw amino-acid sequence, 518 residues long: 3-octaprenyl-4-hydroxybenzoate carboxy-lyase (518 aa).

Residue Asn-177 participates in Mn(2+) binding. Residues 180–182, 194–196, and 199–200 contribute to the prenylated FMN site; these read IYR, RWL, and RG. Glu-243 provides a ligand contact to Mn(2+). Asp-318 acts as the Proton donor in catalysis.

The protein belongs to the UbiD family. Homohexamer. Prenylated FMN is required as a cofactor. The cofactor is Mn(2+).

Its subcellular location is the cell membrane. The catalysed reaction is a 4-hydroxy-3-(all-trans-polyprenyl)benzoate + H(+) = a 2-(all-trans-polyprenyl)phenol + CO2. Its pathway is cofactor biosynthesis; ubiquinone biosynthesis. Catalyzes the decarboxylation of 3-octaprenyl-4-hydroxy benzoate to 2-octaprenylphenol, an intermediate step in ubiquinone biosynthesis. This chain is 3-octaprenyl-4-hydroxybenzoate carboxy-lyase, found in Burkholderia orbicola (strain AU 1054).